We begin with the raw amino-acid sequence, 1169 residues long: Integrin alpha-X (1169 aa).

The N-terminal stretch at 1 to 19 is a signal peptide; that stretch reads MSCTWIAFLLLLGFVSCLG. Residues 20 to 1116 are Extracellular-facing; the sequence is FNLDAEKLTH…EMYKVHNPVP (1097 aa). 2 FG-GAP repeats span residues 23–78 and 79–138; these read DAEK…NCEP and ISLQ…QSQN. An intrachain disulfide couples Cys-69 to Cys-76. Asn-89 carries N-linked (GlcNAc...) asparagine glycosylation. 2 cysteine pairs are disulfide-bonded: Cys-108-Cys-126 and Cys-116-Cys-146. Residues 152-330 form the VWFA domain; that stretch reads DIVFLIDGSG…DALKDIENQL (179 aa). Residues Asp-158, Ser-160, Ser-162, and Asp-260 each contribute to the Mg(2+) site. Residue Asn-267 is glycosylated (N-linked (GlcNAc...) asparagine). FG-GAP repeat units follow at residues 341-392, 393-444, 445-505, 508-566, and 571-631; these read ETPS…PTFI, NMSQ…SRHW, RPKS…GSRW, GTTL…QDIA, and QRIS…FTPA. Asn-393 carries N-linked (GlcNAc...) asparagine glycosylation. Asp-467, Asp-469, Asp-471, and Asp-475 together coordinate Ca(2+). Cys-496 and Cys-507 are oxidised to a cystine. 7 residues coordinate Ca(2+): Asp-531, Asn-533, Asp-535, Asp-539, Asp-594, Asp-598, and Asp-602. 2 disulfide bridges follow: Cys-640-Cys-721 and Cys-656-Cys-711. Asn-734 carries N-linked (GlcNAc...) asparagine glycosylation. 2 disulfide bridges follow: Cys-770-Cys-776 and Cys-858-Cys-873. The N-linked (GlcNAc...) asparagine glycan is linked to Asn-949. 2 disulfide bridges follow: Cys-1007/Cys-1031 and Cys-1036/Cys-1041. N-linked (GlcNAc...) asparagine glycosylation is found at Asn-1059 and Asn-1084. A helical membrane pass occupies residues 1117–1137; sequence LIVGSSVGGLLLLAIITAILY. The Cytoplasmic segment spans residues 1138–1169; it reads KAGFFKRQYKEMLEEANGQFVSDGTPTPQVAQ. A GFFKR motif motif is present at residues 1140 to 1144; the sequence is GFFKR.

The protein belongs to the integrin alpha chain family. Heterodimer of an alpha and a beta subunit. Alpha-X associates with beta-2.

The protein resides in the membrane. Its function is as follows. Integrin alpha-X/beta-2 is a receptor for fibrinogen. It recognizes the sequence G-P-R in fibrinogen. It mediates cell-cell interaction during inflammatory responses. It is especially important in monocyte adhesion and chemotaxis. This is Integrin alpha-X (Itgax) from Mus musculus (Mouse).